Here is a 325-residue protein sequence, read N- to C-terminus: ATP phosphoribosyltransferase (325 aa).

This sequence belongs to the ATP phosphoribosyltransferase family. Long subfamily. Mg(2+) serves as cofactor.

The protein resides in the cytoplasm. The enzyme catalyses 1-(5-phospho-beta-D-ribosyl)-ATP + diphosphate = 5-phospho-alpha-D-ribose 1-diphosphate + ATP. It participates in amino-acid biosynthesis; L-histidine biosynthesis; L-histidine from 5-phospho-alpha-D-ribose 1-diphosphate: step 1/9. Its activity is regulated as follows. Feedback inhibited by histidine. Functionally, catalyzes the condensation of ATP and 5-phosphoribose 1-diphosphate to form N'-(5'-phosphoribosyl)-ATP (PR-ATP). Has a crucial role in the pathway because the rate of histidine biosynthesis seems to be controlled primarily by regulation of HisG enzymatic activity. The sequence is that of ATP phosphoribosyltransferase from Bradyrhizobium diazoefficiens (strain JCM 10833 / BCRC 13528 / IAM 13628 / NBRC 14792 / USDA 110).